Consider the following 422-residue polypeptide: Histidine--tRNA ligase (422 aa).

Belongs to the class-II aminoacyl-tRNA synthetase family. Homodimer.

Its subcellular location is the cytoplasm. The enzyme catalyses tRNA(His) + L-histidine + ATP = L-histidyl-tRNA(His) + AMP + diphosphate + H(+). The chain is Histidine--tRNA ligase from Vibrio vulnificus (strain CMCP6).